Here is a 304-residue protein sequence, read N- to C-terminus: Coenzyme PQQ synthesis protein B (304 aa).

Belongs to the PqqB family.

It participates in cofactor biosynthesis; pyrroloquinoline quinone biosynthesis. In terms of biological role, may be involved in the transport of PQQ or its precursor to the periplasm. The sequence is that of Coenzyme PQQ synthesis protein B from Pseudomonas aeruginosa (strain ATCC 15692 / DSM 22644 / CIP 104116 / JCM 14847 / LMG 12228 / 1C / PRS 101 / PAO1).